A 337-amino-acid polypeptide reads, in one-letter code: Pentalenene synthase (337 aa).

Mg(2+) contacts are provided by aspartate 80 and aspartate 84. The DDXXD motif motif lies at 80–84; the sequence is DDLFD. A disulfide bond links cysteine 128 and cysteine 136. Positions 219, 223, and 227 each coordinate Mg(2+).

It belongs to the terpene synthase family. As to quaternary structure, monomer. Mg(2+) serves as cofactor.

It carries out the reaction (2E,6E)-farnesyl diphosphate = pentalenene + diphosphate. Its pathway is sesquiterpene biosynthesis; pentalenene biosynthesis; pentalenene from farnesyl diphosphate: step 1/1. It functions in the pathway antibiotic biosynthesis; pentalenolactone biosynthesis. Catalyzes the cyclization of farnesyl diphosphate (FPP) to the tricyclic sesquiterpene pentalenene, which is the hydrocarbon precursor of the pentalenolactone family of antibiotics produced by a variety of Streptomyces species. In Streptomyces exfoliatus (Streptomyces hydrogenans), this protein is Pentalenene synthase (penA).